A 463-amino-acid polypeptide reads, in one-letter code: DNA-binding protein K10 (463 aa).

The segment covering Met-1 to Met-13 has biased composition (polar residues). The disordered stretch occupies residues Met-1–Met-304. The span at Gln-14 to Asn-50 shows a compositional bias: low complexity. Residues Gln-85–Pro-94 are compositionally biased toward polar residues. 7 consecutive repeat copies span residues Met-87–Pro-94, Ser-95–Phe-102, Ser-103–Lys-110, His-111–Lys-118, Lys-119–Lys-126, Gln-127–Asn-134, and Gln-135–Asn-142. Residues Met-87–Asn-142 form a 7 X approximate tandem repeats region. The segment covering Asn-142–Gln-193 has biased composition (low complexity). The segment covering Pro-194 to Gln-214 has biased composition (polar residues). 2 stretches are compositionally biased toward pro residues: residues Gly-225–Pro-270 and Gly-282–Leu-291. A DNA-binding region (H-T-H motif) is located at residues Asp-397–Ala-416. The interval Ala-426–Pro-463 is disordered. The span at Lys-430–Asn-441 shows a compositional bias: basic and acidic residues.

In terms of assembly, interacts (via N-terminus) with sqd; the interaction is direct and may be involved in localization of sqd to the oocyte during oogenesis.

It is found in the nucleus. Its function is as follows. May be involved in localization of sqd to the oocyte during oogenesis. The sequence is that of DNA-binding protein K10 (fs(1)K10) from Drosophila melanogaster (Fruit fly).